Here is a 145-residue protein sequence, read N- to C-terminus: 3-dehydroquinate dehydratase (145 aa).

The active-site Proton acceptor is Tyr-23. Substrate is bound by residues Asn-73, His-79, and Asp-86. The Proton donor role is filled by His-99. Substrate contacts are provided by residues 100–101 (LS) and Arg-110.

It belongs to the type-II 3-dehydroquinase family. Homododecamer.

It carries out the reaction 3-dehydroquinate = 3-dehydroshikimate + H2O. The protein operates within metabolic intermediate biosynthesis; chorismate biosynthesis; chorismate from D-erythrose 4-phosphate and phosphoenolpyruvate: step 3/7. Its function is as follows. Catalyzes a trans-dehydration via an enolate intermediate. The protein is 3-dehydroquinate dehydratase of Desulfitobacterium hafniense (strain DSM 10664 / DCB-2).